Reading from the N-terminus, the 351-residue chain is V-type proton ATPase subunit d2 (351 aa).

The protein belongs to the V-ATPase V0D/AC39 subunit family. As to quaternary structure, V-ATPase is a heteromultimeric enzyme composed of a peripheral catalytic V1 complex (components A to H) attached to an integral membrane V0 proton pore complex (components: a, c, c'', d and e).

It localises to the vacuole membrane. Subunit of the integral membrane V0 complex of vacuolar ATPase. Vacuolar ATPase is responsible for acidifying a variety of intracellular compartments in eukaryotic cells, thus providing most of the energy required for transport processes in the vacuolar system. This is V-type proton ATPase subunit d2 (VHA-d2) from Arabidopsis thaliana (Mouse-ear cress).